Here is a 754-residue protein sequence, read N- to C-terminus: 5-methyltetrahydropteroyltriglutamate--homocysteine methyltransferase (754 aa).

5-methyltetrahydropteroyltri-L-glutamate contacts are provided by residues 15–18 and K114; that span reads RELK. Residues 430 to 432 and E483 contribute to the L-homocysteine site; that span reads IGS. L-methionine-binding positions include 430-432 and E483; that span reads IGS. 5-methyltetrahydropteroyltri-L-glutamate-binding positions include 514–515 and W560; that span reads RC. Position 598 (D598) interacts with L-homocysteine. An L-methionine-binding site is contributed by D598. E604 is a binding site for 5-methyltetrahydropteroyltri-L-glutamate. H641, C643, and E665 together coordinate Zn(2+). The active-site Proton donor is H694. C726 contributes to the Zn(2+) binding site.

Belongs to the vitamin-B12 independent methionine synthase family. The cofactor is Zn(2+).

It carries out the reaction 5-methyltetrahydropteroyltri-L-glutamate + L-homocysteine = tetrahydropteroyltri-L-glutamate + L-methionine. The protein operates within amino-acid biosynthesis; L-methionine biosynthesis via de novo pathway; L-methionine from L-homocysteine (MetE route): step 1/1. In terms of biological role, catalyzes the transfer of a methyl group from 5-methyltetrahydrofolate to homocysteine resulting in methionine formation. The sequence is that of 5-methyltetrahydropteroyltriglutamate--homocysteine methyltransferase from Campylobacter jejuni subsp. jejuni serotype O:23/36 (strain 81-176).